Here is a 97-residue protein sequence, read N- to C-terminus: Unclassified hydrophobin F (97 aa).

An N-terminal signal peptide occupies residues M1 to A17. Intrachain disulfides connect C24/C75, C39/C67, C40/C58, and C76/C85.

It localises to the secreted. Its subcellular location is the cell wall. Aerial growth, conidiation, and dispersal of filamentous fungi in the environment rely upon a capability of their secreting small amphipathic proteins called hydrophobins (HPBs) with low sequence identity. Class I can self-assemble into an outermost layer of rodlet bundles on aerial cell surfaces, conferring cellular hydrophobicity that supports fungal growth, development and dispersal; whereas Class II form highly ordered films at water-air interfaces through intermolecular interactions but contribute nothing to the rodlet structure. In P.expansum, hydrophobins contribute to germination, tolerance to cold stress and mycotoxins patulin and citrinin production. HfbC, HfbD, HfbE, and HfbF have functional redundancy in fungal surface hydrophobicity. The polypeptide is Unclassified hydrophobin F (Penicillium expansum (Blue mold rot fungus)).